The primary structure comprises 1138 residues: Envelopment polyprotein (1138 aa).

The N-terminal stretch at 1 to 18 (MEGWYLVVLGVCYTLTLA) is a signal peptide. Over 19–487 (MPKTIYELKM…CVPGLHGWAT (469 aa)) the chain is Lumenal. 11 disulfide bridges follow: cysteine 30/cysteine 155, cysteine 64/cysteine 161, cysteine 113/cysteine 132, cysteine 137/cysteine 142, cysteine 179/cysteine 189, cysteine 214/cysteine 250, cysteine 239/cysteine 354, cysteine 379/cysteine 438, cysteine 383/cysteine 392, cysteine 408/cysteine 427, and cysteine 455/cysteine 478. Residue asparagine 138 is glycosylated (N-linked (GlcNAc...) asparagine; by host). N-linked (GlcNAc...) asparagine; by host glycosylation is present at asparagine 350. Asparagine 402 carries an N-linked (GlcNAc...) asparagine; by host glycan. A helical transmembrane segment spans residues 488–508 (VMLLSTFCFGWVLIPAVTLII). At 509–630 (LKCLRVLTFS…LGVFRYKSRC (122 aa)) the chain is on the cytoplasmic side. The binding to the ribonucleoprotein stretch occupies residues 519–536 (CSHYTNESKFKFILEKVK). CCHC-type zinc fingers lie at residues 548 to 568 (CDVC…RQSC) and 573 to 594 (CPYC…YSIC). 3 binding to the ribonucleoprotein regions span residues 591–608 (YSIC…KKSL), 595–606 (KLTGRFQEALKK), and 614–628 (KKGC…RYKS). Positions 610–637 (KPEVKKGCYRTLGVFRYKSRCYVGLVWC) are interaction with host TRAF3. The ITAM domain occupies 614–637 (KKGCYRTLGVFRYKSRCYVGLVWC). Residues tyrosine 618 and tyrosine 631 each carry the phosphotyrosine modification. The short motif at 618 to 621 (YRTL) is the YxxL element. A helical membrane pass occupies residues 631 to 651 (YVGLVWCLLLTCEIVIWAASA). The Lumenal portion of the chain corresponds to 652 to 1107 (ETPLMESGWS…EWLLGILNGN (456 aa)). Disulfide bonds link cysteine 738–cysteine 773, cysteine 742–cysteine 780, cysteine 754–cysteine 887, cysteine 768–cysteine 898, cysteine 783–cysteine 906, cysteine 809–cysteine 818, cysteine 826–cysteine 835, and cysteine 866–cysteine 870. Residues 760-780 (YQYETGWGCNPGDCPGVGTGC) form a fusion loop region. Asparagine 930 carries N-linked (GlcNAc...) asparagine; by host glycosylation. Intrachain disulfides connect cysteine 972–cysteine 1002, cysteine 995–cysteine 1047, cysteine 1012–cysteine 1017, cysteine 1048–cysteine 1053, and cysteine 1087–cysteine 1091. The helical transmembrane segment at 1108–1128 (WIVVVVLVVILILSIIMFSVL) threads the bilayer. The tract at residues 1124–1138 (MFSVLCPRRGHKKTV) is binding to the ribonucleoprotein. Topologically, residues 1129–1138 (CPRRGHKKTV) are cytoplasmic.

Belongs to the hantavirus envelope glycoprotein family. In terms of assembly, homodimer. Homotetramer; forms heterotetrameric Gn-Gc spikes in the pre-fusion conformation. Interacts (via C-terminus) with the nucleoprotein. Interacts with host TUFM; this interaction contributes to the virus-induced degradation of mitochondria by autophagy, which leads to degradation of host MAVS and inhibition of type I interferon (IFN) responses. Interacts with host MAP1LC3B; this interaction contributes to the virus-induced degradation of mitochondria by autophagy, which leads to degradation of host MAVS and inhibition of type I interferon (IFN) responses. Interacts (via C-terminus) with host TRAF3; this interaction inhibits the formation of TRAF3-TBK1 complexes. Homodimer. Homotetramer; forms heterotetrameric Gn-Gc spikes in the pre-fusion conformation. Homotrimer; forms homotrimer in the post-fusion conformation at acidic pH. Interacts (via C-terminus) with the nucleoprotein. Envelope polyprotein precursor is quickly cleaved in vivo just after synthesis, presumably by host signal peptidase.

The protein localises to the virion membrane. Its subcellular location is the host cell surface. It localises to the host Golgi apparatus membrane. The protein resides in the host endoplasmic reticulum membrane. It is found in the host mitochondrion. Its function is as follows. Forms homotetramers with glycoprotein C at the surface of the virion. Attaches the virion to host cell receptors including integrin ITGAV/ITGB3. This attachment induces virion internalization possibly through clathrin-dependent endocytosis and dynamin-independent macropinocytosis. Mediates the assembly and budding of infectious virus particles through its interaction with the nucleocapsid protein and the viral genome. May dysregulate normal immune and endothelial cell responses through an ITAM motif. Translocates to mitochondria, binds to host TUFM and recruits MAP1LC3B. These interactions induce mitochondrial autophagy and therefore destruction of host MAVS leading to inhibition of type I interferon (IFN) responses. Concomitant breakdown of glycoprotein N is apparently prevented by the nucleoprotein that may inhibit Gn-stimulated autophagosome-lysosome fusion. Interacts with the viral genomic RNA. Inhibits the host RIG-I/TBK1 pathway by disrupting the formation of TBK1-TRAF3 complexes and downstream signaling responses required for IFN-beta transcription. Forms homotetramers with glycoprotein N at the surface of the virion. Attaches the virion to host cell receptors including integrin ITGAV/ITGB3. This attachment induces virion internalization predominantly through clathrin-dependent endocytosis. Class II fusion protein that promotes fusion of viral membrane with host endosomal membrane after endocytosis of the virion. The chain is Envelopment polyprotein (GP) from Abrothrix longipilis (Long-haired grass mouse).